A 329-amino-acid chain; its full sequence is Beta-tectorin (329 aa).

Residues 1–17 (MVVRAFVLLALFAEASA) form the signal peptide. In terms of domain architecture, ZP spans 19 to 283 (SCTPNKADVI…LSCPVNCDKR (265 aa)). N-linked (GlcNAc...) asparagine glycosylation is found at N80, N104, N116, and N145. An intrachain disulfide couples C204 to C264. A305 is lipidated: GPI-anchor amidated alanine. Positions 306–329 (FSGLCDFSDVLLHLILMLGTWAVL) are cleaved as a propeptide — removed in mature form.

In terms of assembly, may form homomeric filament after self-association or heteromeric filament after association with alpha-tectorin. Interacts with CEACAM16. In terms of processing, the presence of a hydrophobic C-terminus preceded by a potential cleavage site strongly suggests that tectorins are synthesized as glycosylphosphatidylinositol-linked, membrane-bound precursors. Tectorins are targeted to the apical surface of the inner ear epithelia by the lipid and proteolytically released into the extracellular compartment.

It localises to the cell membrane. Its subcellular location is the secreted. It is found in the extracellular space. The protein resides in the extracellular matrix. Functionally, one of the major non-collagenous components of the tectorial membrane. The tectorial membrane is an extracellular matrix of the inner ear that covers the neuroepithelium of the cochlea and contacts the stereocilia bundles of specialized sensory hair cells. Sound induces movement of these hair cells relative to the tectorial membrane, deflects the stereocilia and leads to fluctuations in hair-cell membrane potential, transducing sound into electrical signals. In Mus musculus (Mouse), this protein is Beta-tectorin (Tectb).